Reading from the N-terminus, the 627-residue chain is tRNA uridine 5-carboxymethylaminomethyl modification enzyme MnmG (627 aa).

FAD is bound by residues 16–21 (GAGHAG), Val-128, and Ser-183. 275–289 (GPRYCPSIEDKVMRF) contacts NAD(+). Gln-372 serves as a coordination point for FAD.

Belongs to the MnmG family. Homodimer. Heterotetramer of two MnmE and two MnmG subunits. The cofactor is FAD.

Its subcellular location is the cytoplasm. In terms of biological role, NAD-binding protein involved in the addition of a carboxymethylaminomethyl (cmnm) group at the wobble position (U34) of certain tRNAs, forming tRNA-cmnm(5)s(2)U34. This is tRNA uridine 5-carboxymethylaminomethyl modification enzyme MnmG from Geobacter sulfurreducens (strain ATCC 51573 / DSM 12127 / PCA).